Reading from the N-terminus, the 256-residue chain is Thiazole synthase (256 aa).

K95 acts as the Schiff-base intermediate with DXP in catalysis. 1-deoxy-D-xylulose 5-phosphate-binding positions include G156, 182–183 (AG), and 204–205 (NT).

It belongs to the ThiG family. Homotetramer. Forms heterodimers with either ThiH or ThiS.

It localises to the cytoplasm. It catalyses the reaction [ThiS sulfur-carrier protein]-C-terminal-Gly-aminoethanethioate + 2-iminoacetate + 1-deoxy-D-xylulose 5-phosphate = [ThiS sulfur-carrier protein]-C-terminal Gly-Gly + 2-[(2R,5Z)-2-carboxy-4-methylthiazol-5(2H)-ylidene]ethyl phosphate + 2 H2O + H(+). It functions in the pathway cofactor biosynthesis; thiamine diphosphate biosynthesis. In terms of biological role, catalyzes the rearrangement of 1-deoxy-D-xylulose 5-phosphate (DXP) to produce the thiazole phosphate moiety of thiamine. Sulfur is provided by the thiocarboxylate moiety of the carrier protein ThiS. In vitro, sulfur can be provided by H(2)S. The chain is Thiazole synthase from Escherichia coli O157:H7.